Here is a 351-residue protein sequence, read N- to C-terminus: MSHQSTINFIRFTFVILSLLAIYTILIPSIRKGFFQHITECEVTGKLSRSSGADARMIESFTGVPVLDIFVKALVTSFWPVINGENPALSLLGVPAVASMGVSYLLLLLEARRTRSLLSVTWRLAWVGLLQTNFSQAIILPIYCAIAFSSSKKTNGFRPIPHVTISLILCVYTGMALVALPSPAVIPDGLKQVVVAFMVPWALWVFVMVFMASYLFPIEVEKEKSRRTIYIFALVIAATTHLGALLASLLHADLGPADVFLPPLPWYVTRFPSLEEGMASFLQWDYLIASVTLFLWAVAVYLRDCDEHVDWQRFGLEVCAISVIISPAAMAVLLIWRLDEMLSRRGIAKED.

Helical transmembrane passes span 7-27 (INFIRFTFVILSLLAIYTILI), 62-82 (TGVPVLDIFVKALVTSFWPVI), 89-109 (LSLLGVPAVASMGVSYLLLLL), 126-146 (WVGLLQTNFSQAIILPIYCAI), 160-180 (IPHVTISLILCVYTGMALVAL), 193-213 (VVVAFMVPWALWVFVMVFMAS), 229-249 (IYIFALVIAATTHLGALLASL), 281-301 (FLQWDYLIASVTLFLWAVAVY), and 316-336 (LEVCAISVIISPAAMAVLLIW).

It belongs to the membrane-bound ascI terpene cyclase family.

The protein localises to the membrane. The protein operates within secondary metabolite biosynthesis. In terms of biological role, epoxide hydrolase; part of the gene cluster that mediates the biosynthesis of the polyenes aspernidgulenes. The carbon backbone of aspernidgulenes is synthesized by the HR-PKS sdgA, which accepts acetyl-CoA as the starter unit and performs malonyl-CoA extensions as well as regioselective methylation and reduction. The resulting nonaketide offloads the HR-PKS by intramolecular lactonization to yield the 5,6-dihydro-alpha-pyrone-containing hexaenoic acids preaspernidgulene A1 and A2. The FAD-dependent monooxygenase sdgC then installs the first epoxide on the penultimate double bond. Subsequently, the FAD-dependent monooxygenase sdgF presumably generates a ketone intermediate through Meinwald rearrangement involving a hydride shift. Next, sdgC introduces another epoxide on the last olefin of the ketone intermediate after E/Z isomerization. The epoxide hydrolase sdgD then catalyzes stereospecific cyclization of the 5,6-dihydro-alpha-pyrone and opening of the epoxide ring to form an oxygenated trimethylcyclopentanone and an oxabicyclo[2.2.1]heptane unit. Finally, the bicyclic unit undergoes hydrolytic cleavage, either spontaneously or catalyzed by sdgD, to assemble the dimethyl-gamma-lactone moiety in aspernidgulene A1. In Emericella nidulans (strain FGSC A4 / ATCC 38163 / CBS 112.46 / NRRL 194 / M139) (Aspergillus nidulans), this protein is Terpene cyclase sdgD.